Consider the following 353-residue polypeptide: Rhodopsin (353 aa).

Residues 1-36 (MNGTEGPYFYIPMLNTTGIVRSPYEYPQYYLVNPAA) lie on the Extracellular side of the membrane. Asn-2 and Asn-15 each carry an N-linked (GlcNAc...) asparagine glycan. A helical membrane pass occupies residues 37 to 61 (YAALCAYMFLLILLGFPINFLTLYV). Topologically, residues 62-73 (TIEHKKLRTPLN) are cytoplasmic. The helical transmembrane segment at 74–96 (YILLNLAVANLFMVFGGFTTTMY) threads the bilayer. The Extracellular portion of the chain corresponds to 97 to 110 (TSMHGYFVLGRLGC). A disulfide bridge connects residues Cys-110 and Cys-187. Residues 111–133 (NLEGFFATLGGEIGLWSLVVLAV) traverse the membrane as a helical segment. Residues 134-136 (ERW) carry the 'Ionic lock' involved in activated form stabilization motif. Over 134–152 (ERWMVVCKPISNFRFTENH) the chain is Cytoplasmic. Residues 153–173 (AIMGLGFTWFAASACAVPPLV) form a helical membrane-spanning segment. Over 174–202 (GWSRYIPEGMQCSCGVDYYTRAEGFNNES) the chain is Extracellular. Asn-200 carries an N-linked (GlcNAc...) asparagine glycan. A helical membrane pass occupies residues 203–224 (FVVYMFVCHFLIPLIVVFFCYG). At 225 to 252 (RLLCAVKEAAAAQQESETTQRAEREVTR) the chain is on the cytoplasmic side. The chain crosses the membrane as a helical span at residues 253 to 274 (MVVIMVIAFLICWCPYAGVAWY). Residues 275-286 (IFSNQGSEFGPL) are Extracellular-facing. Residues 287-308 (FMTIPAFFAKSSSIYNPLIYIF) form a helical membrane-spanning segment. The residue at position 296 (Lys-296) is an N6-(retinylidene)lysine. The Cytoplasmic portion of the chain corresponds to 309 to 353 (MNKQFRHCMITTLCCGKNPFEEEEGSTTTSKTEASSASSSSVSPA). 2 S-palmitoyl cysteine lipidation sites follow: Cys-322 and Cys-323. The segment at 329–353 (EEEEGSTTTSKTEASSASSSSVSPA) is disordered. Residues 334–353 (STTTSKTEASSASSSSVSPA) are compositionally biased toward low complexity.

Belongs to the G-protein coupled receptor 1 family. Opsin subfamily. Post-translationally, phosphorylated on some or all of the serine and threonine residues present in the C-terminal region. Contains one covalently linked retinal chromophore.

It is found in the membrane. The protein resides in the cell projection. The protein localises to the cilium. Its subcellular location is the photoreceptor outer segment. Photoreceptor required for image-forming vision at low light intensity. While most salt water fish species use retinal as chromophore, most freshwater fish use 3-dehydroretinal, or a mixture of retinal and 3-dehydroretinal. Light-induced isomerization of 11-cis to all-trans retinal triggers a conformational change that activates signaling via G-proteins. Subsequent receptor phosphorylation mediates displacement of the bound G-protein alpha subunit by arrestin and terminates signaling. This chain is Rhodopsin (rho), found in Solea solea (Common sole).